The following is a 1785-amino-acid chain: 1,3-beta-glucan synthase component FKS3 (1785 aa).

8 helical membrane-spanning segments follow: residues 337–357, 375–395, 415–435, 444–464, 508–528, 547–567, 572–592, and 712–732; these read FWIIHFAPFWFFTTFNSPTLY, LSVIAFGGTIACLVQILATVF, IGLLFCLAINLGPSVYVLGFF, AYIVSIVQLIIAFLTTFFFAV, LWVFVYLAKYIESYFFLTLSL, YLLGPILCKWQAKITLVLMLL, LFFLDTYLWYIICNCIFSIVL, and LATPISEPVPVDCMPTFTVLV. Basic and acidic residues-rich tracts occupy residues 791–801 and 815–824; these read ESSHDEDRLEI and DHTESRKLPT. Positions 791–824 are disordered; that stretch reads ESSHDEDRLEIPDALYDPRSSPLSDHTESRKLPT. N-linked (GlcNAc...) asparagine glycans are attached at residues N844, N874, N955, N1002, and N1170. The next 3 helical transmembrane spans lie at 1215–1235, 1268–1288, and 1303–1323; these read LFISFSVQLFFVLLLNLGALN, VSIFVLSIFIVFFIAFAPLLI, and FLHHLLSMAPLFEVFVCQVYS. N1360 is a glycosylation site (N-linked (GlcNAc...) asparagine). Helical transmembrane passes span 1370–1390, 1394–1414, 1475–1495, 1514–1534, and 1549–1569; these read FFMLLFAIISMWQPALLWFWI, SMCFAPFIFNPHQFAFMDFFI, FAELFLPFCVFLFNFTAFSFI, LLVTFLPIFLNSIVLFLLFWV, and AGAVIAFIAHTFSVLVYLLDF. N1579 carries N-linked (GlcNAc...) asparagine glycosylation. A run of 3 helical transmembrane segments spans residues 1585 to 1605, 1655 to 1675, and 1713 to 1733; these read ILLITCINMHLILFKVFTTIF, FFLGHFLLFIQTPIILLPFID, and FSLYFVMLGVLLFMLIAPFFA. N-linked (GlcNAc...) asparagine glycosylation occurs at N1761.

Belongs to the glycosyltransferase 48 family. In terms of processing, N-glycosylated.

It localises to the mitochondrion. It is found in the membrane. The catalysed reaction is [(1-&gt;3)-beta-D-glucosyl](n) + UDP-alpha-D-glucose = [(1-&gt;3)-beta-D-glucosyl](n+1) + UDP + H(+). Required for spore wall assembly. The chain is 1,3-beta-glucan synthase component FKS3 (FKS3) from Saccharomyces cerevisiae (strain ATCC 204508 / S288c) (Baker's yeast).